A 311-amino-acid polypeptide reads, in one-letter code: Porphobilinogen deaminase (311 aa).

Position 241 is an S-(dipyrrolylmethanemethyl)cysteine (Cys-241).

Belongs to the HMBS family. In terms of assembly, monomer. Requires dipyrromethane as cofactor.

The catalysed reaction is 4 porphobilinogen + H2O = hydroxymethylbilane + 4 NH4(+). Its pathway is porphyrin-containing compound metabolism; protoporphyrin-IX biosynthesis; coproporphyrinogen-III from 5-aminolevulinate: step 2/4. Functionally, tetrapolymerization of the monopyrrole PBG into the hydroxymethylbilane pre-uroporphyrinogen in several discrete steps. The polypeptide is Porphobilinogen deaminase (Bacillus pumilus (strain SAFR-032)).